A 332-amino-acid polypeptide reads, in one-letter code: Methionine synthase (332 aa).

3 residues coordinate Zn(2+): His211, Cys213, and Cys296.

Belongs to the archaeal MetE family. Requires Zn(2+) as cofactor.

It functions in the pathway amino-acid biosynthesis; L-methionine biosynthesis via de novo pathway. Catalyzes the transfer of a methyl group to L-homocysteine resulting in methionine formation. The physiological methyl donor is unknown. This is Methionine synthase from Saccharolobus islandicus (strain Y.N.15.51 / Yellowstone #2) (Sulfolobus islandicus).